We begin with the raw amino-acid sequence, 157 residues long: Methylglyoxal synthase (157 aa).

In terms of domain architecture, MGS-like spans M1–L157. Substrate is bound by residues H12, K16, T38–T41, and S71–G72. D77 acts as the Proton donor/acceptor in catalysis. A substrate-binding site is contributed by H104.

It belongs to the methylglyoxal synthase family.

The enzyme catalyses dihydroxyacetone phosphate = methylglyoxal + phosphate. Its function is as follows. Catalyzes the formation of methylglyoxal from dihydroxyacetone phosphate. In Maridesulfovibrio salexigens (strain ATCC 14822 / DSM 2638 / NCIMB 8403 / VKM B-1763) (Desulfovibrio salexigens), this protein is Methylglyoxal synthase.